The primary structure comprises 322 residues: Probable manganese-dependent inorganic pyrophosphatase (322 aa).

Positions 10, 14, 16, 86, 108, and 160 each coordinate Mn(2+).

It belongs to the PPase class C family. Mn(2+) serves as cofactor.

It is found in the cytoplasm. The catalysed reaction is diphosphate + H2O = 2 phosphate + H(+). The protein is Probable manganese-dependent inorganic pyrophosphatase (ppaC) of Archaeoglobus fulgidus (strain ATCC 49558 / DSM 4304 / JCM 9628 / NBRC 100126 / VC-16).